Reading from the N-terminus, the 677-residue chain is UvrABC system protein B (677 aa).

The Helicase ATP-binding domain occupies 24–412; sequence EGVLEGVPAQ…EGIVVEQVIR (389 aa). An ATP-binding site is contributed by 37 to 44; that stretch reads GVTGSGKT. The Beta-hairpin motif lies at 90-113; sequence YYDYYQPEAYLPSSDTYIEKDLAI. The 163-residue stretch at 429 to 591 folds into the Helicase C-terminal domain; that stretch reads QIDDLMEEIQ…ITPQQIKKAR (163 aa). The 36-residue stretch at 635-670 folds into the UVR domain; the sequence is EKSMERTRKLMQEAAKKLEFIEAAQYRDELLKMEDL.

This sequence belongs to the UvrB family. As to quaternary structure, forms a heterotetramer with UvrA during the search for lesions. Interacts with UvrC in an incision complex.

The protein localises to the cytoplasm. Functionally, the UvrABC repair system catalyzes the recognition and processing of DNA lesions. A damage recognition complex composed of 2 UvrA and 2 UvrB subunits scans DNA for abnormalities. Upon binding of the UvrA(2)B(2) complex to a putative damaged site, the DNA wraps around one UvrB monomer. DNA wrap is dependent on ATP binding by UvrB and probably causes local melting of the DNA helix, facilitating insertion of UvrB beta-hairpin between the DNA strands. Then UvrB probes one DNA strand for the presence of a lesion. If a lesion is found the UvrA subunits dissociate and the UvrB-DNA preincision complex is formed. This complex is subsequently bound by UvrC and the second UvrB is released. If no lesion is found, the DNA wraps around the other UvrB subunit that will check the other stand for damage. The chain is UvrABC system protein B from Bacteroides fragilis (strain YCH46).